A 395-amino-acid polypeptide reads, in one-letter code: Chorismate synthase (395 aa).

It belongs to the chorismate synthase family. In terms of assembly, homotetramer. It depends on FMNH2 as a cofactor.

It catalyses the reaction 5-O-(1-carboxyvinyl)-3-phosphoshikimate = chorismate + phosphate. It functions in the pathway metabolic intermediate biosynthesis; chorismate biosynthesis; chorismate from D-erythrose 4-phosphate and phosphoenolpyruvate: step 7/7. In Schizosaccharomyces pombe (strain 972 / ATCC 24843) (Fission yeast), this protein is Chorismate synthase.